We begin with the raw amino-acid sequence, 272 residues long: Short-chain dehydrogenase/reductase iacC (272 aa).

Isoleucine 13, aspartate 59, and asparagine 88 together coordinate NADP(+). Active-site proton donor residues include serine 150 and tyrosine 169. Positions 169, 173, and 202 each coordinate NADP(+). The active-site Lowers pKa of active site Tyr is lysine 173.

This sequence belongs to the short-chain dehydrogenases/reductases (SDR) family.

It participates in secondary metabolite biosynthesis. Short-chain dehydrogenase/reductase; part of the gene cluster that mediates the biosynthesis of iso-A82775C, a enylepoxycyclohexane and biosynthetic precursor of the chloropestolide anticancer natural products. Within the cluster, the prenyltransferase iacE prenylates siccayne to generate pestalodiol E, using dimethylallyl diphosphate (DMAPP) as cosubstrate. The probable oxidoreductase iacF is then involved in the epoxidation of pestalodiol F to pestalodiol F, which is further converted to pestalofone A by the short-chain dehydrogenase/reductase iacG. Iso-A82775C is subsequently generated from pestalofone A by the short-chain dehydrogenase/reductase iacC. Iso-A82775C is further condensed with maldoxin via a Diels-Alder reaction to produce the anticancer natural products chloropestolides A to E. This is Short-chain dehydrogenase/reductase iacC from Pestalotiopsis fici (strain W106-1 / CGMCC3.15140).